We begin with the raw amino-acid sequence, 171 residues long: Ribosome maturation factor RimM (171 aa).

One can recognise a PRC barrel domain in the interval 96–168 (EDGFYDHELE…TATITPPEGL (73 aa)).

Belongs to the RimM family. Binds ribosomal protein uS19.

It localises to the cytoplasm. Functionally, an accessory protein needed during the final step in the assembly of 30S ribosomal subunit, possibly for assembly of the head region. Essential for efficient processing of 16S rRNA. May be needed both before and after RbfA during the maturation of 16S rRNA. It has affinity for free ribosomal 30S subunits but not for 70S ribosomes. The sequence is that of Ribosome maturation factor RimM from Corynebacterium glutamicum (strain ATCC 13032 / DSM 20300 / JCM 1318 / BCRC 11384 / CCUG 27702 / LMG 3730 / NBRC 12168 / NCIMB 10025 / NRRL B-2784 / 534).